Consider the following 430-residue polypeptide: tRNA-2-methylthio-N(6)-dimethylallyladenosine synthase (430 aa).

Residues 2-111 form the MTTase N-terminal domain; sequence KKIHIKTYGC…IPQAVERAIN (110 aa). Residues cysteine 11, cysteine 47, cysteine 76, cysteine 147, cysteine 151, and cysteine 154 each coordinate [4Fe-4S] cluster. The Radical SAM core domain maps to 133–364; the sequence is RNSKHHAWIT…LNLQKEINKQ (232 aa). Positions 367–428 constitute a TRAM domain; sequence ENYLNKTVEI…AGPLYGDIIK (62 aa).

This sequence belongs to the methylthiotransferase family. MiaB subfamily. Monomer. [4Fe-4S] cluster serves as cofactor.

It localises to the cytoplasm. It carries out the reaction N(6)-dimethylallyladenosine(37) in tRNA + (sulfur carrier)-SH + AH2 + 2 S-adenosyl-L-methionine = 2-methylsulfanyl-N(6)-dimethylallyladenosine(37) in tRNA + (sulfur carrier)-H + 5'-deoxyadenosine + L-methionine + A + S-adenosyl-L-homocysteine + 2 H(+). Catalyzes the methylthiolation of N6-(dimethylallyl)adenosine (i(6)A), leading to the formation of 2-methylthio-N6-(dimethylallyl)adenosine (ms(2)i(6)A) at position 37 in tRNAs that read codons beginning with uridine. This chain is tRNA-2-methylthio-N(6)-dimethylallyladenosine synthase, found in Thermosipho melanesiensis (strain DSM 12029 / CIP 104789 / BI429).